The chain runs to 456 residues: tRNA modification GTPase MnmE (456 aa).

(6S)-5-formyl-5,6,7,8-tetrahydrofolate is bound by residues Arg23, Glu80, and Lys122. Residues 218-380 enclose the TrmE-type G domain; the sequence is AKRIVIVGPP…LKKHLSNRQK (163 aa). Asn228 is a binding site for K(+). GTP is bound by residues 228 to 233, 247 to 253, and 272 to 275; these read NAGKSS, TDLPGTT, and DTAG. Ser232 is a Mg(2+) binding site. The K(+) site is built by Thr247, Leu249, and Thr252. Thr253 contacts Mg(2+). Lys456 lines the (6S)-5-formyl-5,6,7,8-tetrahydrofolate pocket.

This sequence belongs to the TRAFAC class TrmE-Era-EngA-EngB-Septin-like GTPase superfamily. TrmE GTPase family. In terms of assembly, homodimer. Heterotetramer of two MnmE and two MnmG subunits. It depends on K(+) as a cofactor.

It is found in the cytoplasm. In terms of biological role, exhibits a very high intrinsic GTPase hydrolysis rate. Involved in the addition of a carboxymethylaminomethyl (cmnm) group at the wobble position (U34) of certain tRNAs, forming tRNA-cmnm(5)s(2)U34. In Buchnera aphidicola subsp. Schizaphis graminum (strain Sg), this protein is tRNA modification GTPase MnmE.